The following is a 369-amino-acid chain: Homoserine O-succinyltransferase (369 aa).

Positions 1-21 are disordered; the sequence is MVRIVPSARRTRAPAKLDGRS. An AB hydrolase-1 domain is found at 86-350; it reads VVFVAGGISA…PFGHDAFLKE (265 aa). Residues 92–95 are important for substrate specificity; the sequence is GISA. S172 functions as the Nucleophile in the catalytic mechanism. Position 233 (R233) interacts with substrate. Active-site residues include D314 and H344. Substrate is bound at residue D345.

Belongs to the AB hydrolase superfamily. MetX family. In terms of assembly, homodimer.

The protein resides in the cytoplasm. The catalysed reaction is L-homoserine + succinyl-CoA = O-succinyl-L-homoserine + CoA. It participates in amino-acid biosynthesis; L-methionine biosynthesis via de novo pathway; O-succinyl-L-homoserine from L-homoserine: step 1/1. Transfers a succinyl group from succinyl-CoA to L-homoserine, forming succinyl-L-homoserine. The polypeptide is Homoserine O-succinyltransferase (Xanthomonas campestris pv. campestris (strain ATCC 33913 / DSM 3586 / NCPPB 528 / LMG 568 / P 25)).